Consider the following 550-residue polypeptide: Sorting nexin-33 (550 aa).

Residues 1–61 (MALKARALYS…PASYVEIQSS (61 aa)) form the SH3 domain. The tract at residues 62 to 152 (RSGSVQVDYS…QDSIASGKRG (91 aa)) is disordered. Over residues 86-102 (YDDDDEEDDDDWDDWDD) the composition is skewed to acidic residues. The segment covering 128 to 144 (SRPEYSHRPRPALERQD) has biased composition (basic and acidic residues). The region spanning 206-316 (FNCSVEEPTK…HFLGCQDEKQ (111 aa)) is the PX domain. A BAR domain is found at 347–550 (LQDVEERVDV…EKTLHLYDEL (204 aa)).

It belongs to the sorting nexin family.

Its subcellular location is the cytoplasm. It localises to the cytosol. The protein resides in the membrane. The protein localises to the cytoplasmic vesicle membrane. Its function is as follows. Plays a role in the reorganization of the cytoskeleton, endocytosis and cellular vesicle trafficking, both during interphase and at the end of mitotic cell divisions. Required for efficient progress through mitosis and cytokinesis. Required for normal formation of the cleavage furrow at the end of mitosis. Modulates endocytosis of cell-surface proteins. Promotes membrane tubulation (in vitro). May promote the formation of macropinosomes. This Xenopus laevis (African clawed frog) protein is Sorting nexin-33 (snx33).